The following is a 107-amino-acid chain: ATP-dependent Clp protease adapter protein ClpS (107 aa).

The tract at residues 1 to 20 (MAQKHEHDTSVITESAPKQK) is disordered.

Belongs to the ClpS family. In terms of assembly, binds to the N-terminal domain of the chaperone ClpA.

In terms of biological role, involved in the modulation of the specificity of the ClpAP-mediated ATP-dependent protein degradation. The protein is ATP-dependent Clp protease adapter protein ClpS of Myxococcus xanthus (strain DK1622).